A 524-amino-acid chain; its full sequence is Magnesium/proton exchanger 2 (524 aa).

Transmembrane regions (helical) follow at residues 28 to 48 (GVRAFIYTVVLAYCFIGLSAI), 88 to 108 (IADVALLAFGTSFPQISLATI), 125 to 145 (GTLVGSAAFDLFPIHAVCVVM), 157 to 177 (LGVWLVELFWSFWAYIWLYII), 185 to 205 (VITLWEALLTVLQYGLLLLHA), 325 to 345 (VIGISWNLIIAPWKMLFAFIP), 349 to 369 (IAHGWIAFICSLIFISGIAYG), 377 to 397 (ISCVTGVSPYVIAFTALAAGT), 430 to 450 (IYVGIGVPWLVDTMYNYLFVY), 462 to 482 (LSFSLLVFFATSFGCITVLVL), and 496 to 516 (MWAWATSVYFMILWVVFVVLS).

This sequence belongs to the Ca(2+):cation antiporter (CaCA) (TC 2.A.19) family. MHX subfamily.

The protein localises to the vacuole membrane. Vacuolar transporter that exchanges protons with Mg(2+), Zn(2+) and Fe(2+) ions. May control the partitioning of Mg(2+) and Zn(2+) between plant organs. The sequence is that of Magnesium/proton exchanger 2 (MHX2) from Oryza sativa subsp. japonica (Rice).